The following is a 399-amino-acid chain: Phosphoglycerate kinase (399 aa).

Residues 22-24 (DFN), Arg38, 61-64 (HLGR), Arg120, and Arg153 contribute to the substrate site. Residues Lys204, Glu326, and 353-356 (GGDT) contribute to the ATP site.

It belongs to the phosphoglycerate kinase family. As to quaternary structure, monomer.

Its subcellular location is the cytoplasm. It catalyses the reaction (2R)-3-phosphoglycerate + ATP = (2R)-3-phospho-glyceroyl phosphate + ADP. It participates in carbohydrate degradation; glycolysis; pyruvate from D-glyceraldehyde 3-phosphate: step 2/5. In Geotalea daltonii (strain DSM 22248 / JCM 15807 / FRC-32) (Geobacter daltonii), this protein is Phosphoglycerate kinase.